Reading from the N-terminus, the 279-residue chain is Protein K1 (279 aa).

Residues 1-18 (MFLYVVCSLAVCFRGLLS) form the signal peptide. The Extracellular segment spans residues 19–220 (LSLQSSPNLC…TYLYIQEHLL (202 aa)). Residues 221–241 (VFMTLVALIGTMCGILGTIIF) traverse the membrane as a helical segment. Over 242 to 279 (AHCQKQRDSNKTVPQQLQDYYSLHDLCTEDYTQPVDWY) the chain is Cytoplasmic.

As to quaternary structure, homooligomer.

The protein localises to the host membrane. Functionally, promotes host cell survival pathways and may contribute to pathogenesis by preventing infected cells from undergoing apoptosis. Acts in host B-cells by mimicking the activated B-cell receptor complex. The cytoplasmic tail of K1 can induce the phosphorylation of a number of different kinases, leading to the activation of survival signaling pathways. The sequence is that of Protein K1 (K1) from Human herpesvirus 8 type P (isolate GK18) (HHV-8).